The chain runs to 458 residues: ATP synthase subunit beta (458 aa).

Position 148 to 155 (148 to 155 (GGAGVGKT)) interacts with ATP.

This sequence belongs to the ATPase alpha/beta chains family. In terms of assembly, F-type ATPases have 2 components, CF(1) - the catalytic core - and CF(0) - the membrane proton channel. CF(1) has five subunits: alpha(3), beta(3), gamma(1), delta(1), epsilon(1). CF(0) has three main subunits: a(1), b(2) and c(9-12). The alpha and beta chains form an alternating ring which encloses part of the gamma chain. CF(1) is attached to CF(0) by a central stalk formed by the gamma and epsilon chains, while a peripheral stalk is formed by the delta and b chains.

The protein localises to the cell inner membrane. The enzyme catalyses ATP + H2O + 4 H(+)(in) = ADP + phosphate + 5 H(+)(out). Functionally, produces ATP from ADP in the presence of a proton gradient across the membrane. The catalytic sites are hosted primarily by the beta subunits. In Actinobacillus succinogenes (strain ATCC 55618 / DSM 22257 / CCUG 43843 / 130Z), this protein is ATP synthase subunit beta.